The sequence spans 1177 residues: Tyrosine-protein kinase hopscotch (1177 aa).

Residues 1–41 (MALANGGEDRMDDSSSGRTSLADSASLTNSSLRSGTSSQSI) are disordered. Residues 16–41 (SGRTSLADSASLTNSSLRSGTSSQSI) are compositionally biased toward polar residues. Phosphoserine is present on residues S40 and S321. The region spanning 46–414 (GTIRVFNFTT…IYIRLSSKWM (369 aa)) is the FERM domain. In terms of domain architecture, SH2; atypical spans 433 to 539 (HCHGPIGGAY…YRIPASKYDK (107 aa)). 2 consecutive Protein kinase domains span residues 582–843 (YPDS…AEIL) and 892–1164 (YNME…HPTD). ATP is bound by residues 898 to 906 (IGRGHYGTV) and K926. D1014 (proton acceptor) is an active-site residue. 2 positions are modified to phosphotyrosine; by autocatalysis: Y1047 and Y1048. The interval 1158–1177 (KVTHPTDGHQSPPNQPTDAE) is disordered.

Belongs to the protein kinase superfamily. Tyr protein kinase family. JAK subfamily. Forms a complex with Hsp83 and piwi; probably Hop mediates the interaction between piwi and Hsp83.

It is found in the endomembrane system. The catalysed reaction is L-tyrosyl-[protein] + ATP = O-phospho-L-tyrosyl-[protein] + ADP + H(+). In terms of biological role, tyrosine kinase of the non-receptor type, phosphorylates the marelle protein. Required maternally for the establishment of the normal array of embryonic segments: involved in the control of pair-rule gene transcription in a stripe-specific manner. Together with Hsp83 and piwi, mediates canalization, also known as developmental robustness, likely via epigenetic silencing of existing genetic variants and suppression of transposon-induced new genetic variation. This Drosophila melanogaster (Fruit fly) protein is Tyrosine-protein kinase hopscotch (hop).